Reading from the N-terminus, the 186-residue chain is dCTP deaminase (186 aa).

107 to 112 is a dCTP binding site; the sequence is KSSYAR. The active-site Proton donor/acceptor is E133. 3 residues coordinate dCTP: Q152, Y166, and Q176.

The protein belongs to the dCTP deaminase family. As to quaternary structure, homotrimer.

It carries out the reaction dCTP + H2O + H(+) = dUTP + NH4(+). It participates in pyrimidine metabolism; dUMP biosynthesis; dUMP from dCTP (dUTP route): step 1/2. In terms of biological role, catalyzes the deamination of dCTP to dUTP. The polypeptide is dCTP deaminase (Chloroflexus aggregans (strain MD-66 / DSM 9485)).